A 104-amino-acid polypeptide reads, in one-letter code: Replication restart protein PriB (104 aa).

The SSB domain maps to 1-101; sequence MTNRLELSGI…LHAEQIELID (101 aa).

It belongs to the PriB family. As to quaternary structure, homodimer. Interacts with DnaT. Interacts with PriA. Component of the replication restart primosome. Primosome assembly occurs via a 'hand-off' mechanism. PriA binds to replication forks, subsequently PriB then DnaT bind; DnaT then displaces ssDNA to generate the helicase loading substrate.

Its function is as follows. Involved in the restart of stalled replication forks, which reloads the replicative helicase on sites far from the origin of replication; the PriA-PriB pathway is the major replication restart pathway. During primosome assembly it facilitates complex formation between PriA and DnaT on DNA; stabilizes PriA on DNA. Stimulates the DNA unwinding activity of PriA helicase. Binds single-stranded (ss)DNA at the primosome assembly site (PAS). One study finds it binds 15 nucleotide (nt) ssDNA. Another study finds the minimal ssDNA length for binding to PriB is 25 nt; prefers dT(30) over dA(30). Also binds 22 nt dsDNA. The polypeptide is Replication restart protein PriB (Klebsiella pneumoniae subsp. pneumoniae (strain ATCC 700721 / MGH 78578)).